The sequence spans 122 residues: Large ribosomal subunit protein uL14 (122 aa).

This sequence belongs to the universal ribosomal protein uL14 family. As to quaternary structure, part of the 50S ribosomal subunit. Forms a cluster with proteins L3 and L19. In the 70S ribosome, L14 and L19 interact and together make contacts with the 16S rRNA in bridges B5 and B8.

In terms of biological role, binds to 23S rRNA. Forms part of two intersubunit bridges in the 70S ribosome. The polypeptide is Large ribosomal subunit protein uL14 (Nocardioides sp. (strain ATCC BAA-499 / JS614)).